The following is a 285-amino-acid chain: NAC domain-containing protein 92 (285 aa).

The region spanning 20–170 (LPPGFRFHPT…EWVICRVFQK (151 aa)) is the NAC domain. Residues 117–176 (VGMKKTLVFYKGRAPKGVKTNWVMHEYRLEGKYCIENLPQTAKNEWVICRVFQKRADGTK) mediate DNA binding.

As to quaternary structure, forms homodimers. Interacts with GLK1 and GLK2. Interacts with NLA. In terms of processing, ubiquitinated by NLA. Ubiquitination of NAC92 leads to its degradation by the proteasome during leaf senescence under nitrogen deficiency. In terms of tissue distribution, mostly expressed in roots and flowers, and, to a lower extent, in shoots and leaves. Particularly expressed in old and senescing tissues.

Its subcellular location is the nucleus. Transcription activator that binds to DNA in promoters of target genes on a specific bipartite motif 5'-[ACG][CA]GT[AG](5-6n)[CT]AC[AG]-3'. Promotes lateral root development. Triggers the expression of senescence-associated genes during age-, salt- and dark-induced senescence through a regulatory network that may involve cross-talk with salt- and H(2)O(2)-dependent signaling pathways. Also regulates genes during seed germination. Positively regulates aging-induced cell death. Involved in age-related resistance (ARR) against Pseudomonas syringae pv. tomato and Hyaloperonospora arabidopsidis. Antagonizes GLK1 and GLK2 transcriptional activity, shifting the balance from chloroplast maintenance towards deterioration during leaf senescence. Promotes the expression of senescence-associated genes, including ENDO1/BFN1, SWEET15/SAG29 and SINA1/At3g13672, during senescence onset. The polypeptide is NAC domain-containing protein 92 (Arabidopsis thaliana (Mouse-ear cress)).